We begin with the raw amino-acid sequence, 590 residues long: MAINLQKPDITELKPRITVFGVGGGGGNAVNNMITAGLQGVDFVVANTDAQALTMTKAERIIQMGVAVTEGLGAGSQPEVGRAAAEECIDEIIDHLQGTHMCFVTAGMGGGTGTGAAPIVAQAARNKGILTVGVVTKPFHFEGGRRMRIADQGISDLQKSVDTLIVIPNQNLFRIANDKTTFADAFAMADQVLYSGVACITDLMVKEGLINLDFADVRSVMREMGRAMMGTGEASGEGRAMAAAEAAIANPLLDETSMKGAQGLLISITGGRDLTLFEVDEAATRIREEVDPDANIILGATFDEELEGLIRVSVVATGIDRTAAEVAGRSADFRPVAPKPIVRPSAAVPAQPQPTVSLQPVPQPQPVQQPLQQQNVDHIALAIREAEMERELDIAARAQVAAPAPQPQPHLQEEAFRPQSKLFAGVAPTEAAPVMRPAQPAPRPVEMQAPVQPQMQAQPVQQEPTQVVRQQAEPVRMPKVEDFPPVVKAEMDYRTQPAPAHQEERGPMGLLNRITSSLGLREREATNVSSDMTAAAPSAASQQRRPLSPEASLYAPRRGQLDDHGRAAPQMRSHEDDQLEIPAFLRRQSS.

GTP is bound by residues 24-28 (GGGGN), 111-113 (GTG), Glu142, Arg146, and Asp190. 2 disordered regions span residues 346–372 (AAVP…QPLQ) and 524–590 (EATN…RQSS). The span at 534–546 (AAAPSAASQQRRP) shows a compositional bias: low complexity. Positions 559 to 576 (GQLDDHGRAAPQMRSHED) are enriched in basic and acidic residues.

The protein belongs to the FtsZ family. In terms of assembly, homodimer. Polymerizes to form a dynamic ring structure in a strictly GTP-dependent manner. Interacts directly with several other division proteins.

Its subcellular location is the cytoplasm. Essential cell division protein that forms a contractile ring structure (Z ring) at the future cell division site. The regulation of the ring assembly controls the timing and the location of cell division. One of the functions of the FtsZ ring is to recruit other cell division proteins to the septum to produce a new cell wall between the dividing cells. Binds GTP and shows GTPase activity. This is Cell division protein FtsZ 1 from Rhizobium meliloti (strain 1021) (Ensifer meliloti).